A 144-amino-acid polypeptide reads, in one-letter code: Cytochrome c oxidase subunit 4 isoform 1, mitochondrial (144 aa).

At 1–73 (SVVKSEDYAL…SFAEMNRGSN (73 aa)) the chain is on the mitochondrial matrix side. Residue K4 is modified to N6-acetyllysine; alternate. K4 bears the N6-succinyllysine; alternate mark. A phosphoserine mark is found at S31 and S33. The residue at position 35 (K35) is an N6-acetyllysine; alternate. K35 carries the post-translational modification N6-succinyllysine; alternate. K42 bears the N6-acetyllysine mark. A helical membrane pass occupies residues 74-99 (EWKTVVGAAMFFIGFTAILIILEKRY). Over 100–144 (VYGPLPHTFDKEWVAMQTKRMLDLKVNPVDGLASKWDYDKKEWKK) the chain is Mitochondrial intermembrane.

Belongs to the cytochrome c oxidase IV family. As to quaternary structure, component of the cytochrome c oxidase (complex IV, CIV), a multisubunit enzyme composed of 14 subunits. The complex is composed of a catalytic core of 3 subunits MT-CO1, MT-CO2 and MT-CO3, encoded in the mitochondrial DNA, and 11 supernumerary subunits COX4I, COX5A, COX5B, COX6A, COX6B, COX6C, COX7A, COX7B, COX7C, COX8 and NDUFA4, which are encoded in the nuclear genome. The complex exists as a monomer or a dimer and forms supercomplexes (SCs) in the inner mitochondrial membrane with NADH-ubiquinone oxidoreductase (complex I, CI) and ubiquinol-cytochrome c oxidoreductase (cytochrome b-c1 complex, complex III, CIII), resulting in different assemblies (supercomplex SCI(1)III(2)IV(1) and megacomplex MCI(2)III(2)IV(2)). Interacts with PHB2; the interaction decreases in absence of SPHK2. Interacts with AFG1L. Interacts with ABCB7; this interaction allows the regulation of cellular iron homeostasis and cellular reactive oxygen species (ROS) levels in cardiomyocytes. Interacts with FLVCR2; this interaction occurs in the absence of heme and is disrupted upon heme binding. Interacts with IRGC.

The protein resides in the mitochondrion inner membrane. It participates in energy metabolism; oxidative phosphorylation. In terms of biological role, component of the cytochrome c oxidase, the last enzyme in the mitochondrial electron transport chain which drives oxidative phosphorylation. The respiratory chain contains 3 multisubunit complexes succinate dehydrogenase (complex II, CII), ubiquinol-cytochrome c oxidoreductase (cytochrome b-c1 complex, complex III, CIII) and cytochrome c oxidase (complex IV, CIV), that cooperate to transfer electrons derived from NADH and succinate to molecular oxygen, creating an electrochemical gradient over the inner membrane that drives transmembrane transport and the ATP synthase. Cytochrome c oxidase is the component of the respiratory chain that catalyzes the reduction of oxygen to water. Electrons originating from reduced cytochrome c in the intermembrane space (IMS) are transferred via the dinuclear copper A center (CU(A)) of subunit 2 and heme A of subunit 1 to the active site in subunit 1, a binuclear center (BNC) formed by heme A3 and copper B (CU(B)). The BNC reduces molecular oxygen to 2 water molecules using 4 electrons from cytochrome c in the IMS and 4 protons from the mitochondrial matrix. The protein is Cytochrome c oxidase subunit 4 isoform 1, mitochondrial (COX4I1) of Aotus azarae (Azara's night monkey).